Here is a 316-residue protein sequence, read N- to C-terminus: Polyprenyl transferase prhE (316 aa).

9 consecutive transmembrane segments (helical) span residues 45–65 (VVGVAYTAAISPVTLPSTFLL), 69–89 (VILSLWGFCIRSAGCAWNDLI), 114–134 (GAALLAAFMFGCGGSLLLLLP), 135–155 (SQCAFEAAIVVFFALLYPFGK), 163–183 (LILTNIAWAIPMAMSSLDMSP), 188–208 (IPTLAMSFSIASVIVMIDIVY), 231–253 (ITDQIAYGLFFSGTLSLLVGGIL), 257–276 (GFPFLIFSVGGHFLGFLRFL), and 296–316 (SCLLATMLLVFGLCFEYCVRL).

Belongs to the UbiA prenyltransferase family. Requires Mg(2+) as cofactor.

The protein resides in the membrane. It carries out the reaction 3,5-dimethylorsellinate + (2E,6E)-farnesyl diphosphate = (3R)-3-farnesyl-6-hydroxy-2,3,5-trimethyl-4-oxocyclohexa-1,5-diene-1-carboxylate + diphosphate + H(+). Its pathway is secondary metabolite biosynthesis; terpenoid biosynthesis. Its function is as follows. Polyprenyl transferase; part of the gene cluster that mediates the biosynthesis of paraherquonin, a meroterpenoid with a unique, highly congested hexacyclic molecular architecture. The first step of the pathway is the synthesis of 3,5-dimethylorsellinic acid (DMOA) by the polyketide synthase prhL. Synthesis of DMOA is followed by farnesylation by the prenyltransferase prhE, methylesterification by the methyl-transferase prhM, epoxidation of the prenyl chain by the flavin-dependent monooxygenase prhF, and cyclization of the farnesyl moiety by the terpene cyclase prhH, to yield the tetracyclic intermediate, protoaustinoid A. The short chain dehydrogenase prhI then oxidizes the C-3 alcohol group of the terpene cyclase product to transform protoaustinoid A into protoaustinoid B. The FAD-binding monooxygenase prhJ catalyzes the oxidation of protoaustinoid B into preaustinoid A which is further oxidized into preaustinoid A1 by FAD-binding monooxygenase phrK. Finally, prhA leads to berkeleydione via the berkeleyone B intermediate. PrhA is a multifunctional dioxygenase that first desaturates at C5-C6 to form berkeleyone B, followed by rearrangement of the A/B-ring to form the cycloheptadiene moiety in berkeleydione. Berkeleydione serves as the key intermediate for the biosynthesis of paraherquonin as well as many other meroterpenoids. The cytochrome P450 monooxygenases prhB, prhD, and prhN, as well as the isomerase prhC, are probably involved in the late stage of paraherquonin biosynthesis, after the production of berkeleydione. Especially prhC might be a multifunctional enzyme that catalyzes the D-ring expansion via intramolecular methoxy rearrangement, as well as the hydrolysis of the expanded D-ring. The chain is Polyprenyl transferase prhE from Penicillium brasilianum.